The chain runs to 274 residues: Penicillin-insensitive murein endopeptidase (274 aa).

Positions 1-19 (MNKTAIALLALLASSASLA) are cleaved as a signal peptide. Disulfide bonds link cysteine 44/cysteine 265, cysteine 187/cysteine 235, and cysteine 216/cysteine 223. Positions 110, 113, 120, 147, 150, and 211 each coordinate Zn(2+). Residues 228-264 (LPPPGDGCGAELQSWFAPPKPGTTKPEKKTPSPLPPS) are disordered.

This sequence belongs to the peptidase M74 family. Dimer. Zn(2+) is required as a cofactor.

The protein resides in the periplasm. Functionally, murein endopeptidase that cleaves the D-alanyl-meso-2,6-diamino-pimelyl amide bond that connects peptidoglycan strands. Likely plays a role in the removal of murein from the sacculus. In Escherichia coli (strain 55989 / EAEC), this protein is Penicillin-insensitive murein endopeptidase.